Here is a 180-residue protein sequence, read N- to C-terminus: MALREIIIVPDKQLRLTSKPVETVSPEVRKLADDMFETMYDAPGIGLAAIQIAEPVRLITMDLVRKEGNGKTEPRAFINPEIIGASTETRVYEEGCLSIPEYYAEVERPAQVRIRYTDLDGHVHEEDADGLFATCIQHEIDHLNGTLFIDHISRLKRALVMRKFEKAAKRGYKFVPAKTA.

Fe cation contacts are provided by Cys96 and His138. Glu139 is a catalytic residue. His142 contributes to the Fe cation binding site.

The protein belongs to the polypeptide deformylase family. Fe(2+) serves as cofactor.

It catalyses the reaction N-terminal N-formyl-L-methionyl-[peptide] + H2O = N-terminal L-methionyl-[peptide] + formate. Removes the formyl group from the N-terminal Met of newly synthesized proteins. Requires at least a dipeptide for an efficient rate of reaction. N-terminal L-methionine is a prerequisite for activity but the enzyme has broad specificity at other positions. In Rhodopseudomonas palustris (strain BisA53), this protein is Peptide deformylase.